Here is a 218-residue protein sequence, read N- to C-terminus: Adenylate kinase (218 aa).

10–15 (GAGKGT) is a binding site for ATP. An NMP region spans residues 30-59 (STGDMLRAAVKAGTPLGLEAKKVMDAGGLV). AMP-binding positions include T31, R36, 57 to 59 (GLV), 85 to 88 (GFPR), and Q92. Residues 122–159 (GRRVHVASGRTYHVKFNPPKVAGKDDETGEDLIQRADD) are LID. ATP contacts are provided by residues R123 and 132 to 133 (TY). AMP contacts are provided by R156 and R167. G203 contacts ATP.

This sequence belongs to the adenylate kinase family. In terms of assembly, monomer.

Its subcellular location is the cytoplasm. The catalysed reaction is AMP + ATP = 2 ADP. Its pathway is purine metabolism; AMP biosynthesis via salvage pathway; AMP from ADP: step 1/1. Functionally, catalyzes the reversible transfer of the terminal phosphate group between ATP and AMP. Plays an important role in cellular energy homeostasis and in adenine nucleotide metabolism. This chain is Adenylate kinase, found in Laribacter hongkongensis (strain HLHK9).